The sequence spans 584 residues: Actin-binding protein IPP (584 aa).

In terms of domain architecture, BTB spans 37-104 (CDVQLQVGKE…IYTGVVNIAV (68 aa)). Kelch repeat units lie at residues 296–343 (YTRL…VVGG), 344–390 (MVYA…VCYG), 391–437 (AIYA…EMQG), 439–485 (IYAV…ALND), 487–533 (IYAI…TVNG), and 535–583 (LYVS…GVAV).

Expression seems confined to tissues derived from trophectoderm and primitive endoderm.

The protein resides in the cytoplasm. It is found in the cytoskeleton. Its function is as follows. May play a role in organizing the actin cytoskeleton. This chain is Actin-binding protein IPP (Ipp), found in Mus musculus (Mouse).